Here is a 314-residue protein sequence, read N- to C-terminus: Protein translocase subunit SecF (314 aa).

Transmembrane regions (helical) follow at residues alanine 17 to leucine 37, glutamine 137 to tyrosine 157, glutamate 158 to glycine 178, serine 188 to phenylalanine 210, threonine 250 to phenylalanine 270, and leucine 272 to valine 292.

It belongs to the SecD/SecF family. SecF subfamily. As to quaternary structure, forms a complex with SecD. Part of the essential Sec protein translocation apparatus which comprises SecA, SecYEG and auxiliary proteins SecDF. Other proteins may also be involved.

It localises to the cell inner membrane. Part of the Sec protein translocase complex. Interacts with the SecYEG preprotein conducting channel. SecDF uses the proton motive force (PMF) to complete protein translocation after the ATP-dependent function of SecA. The polypeptide is Protein translocase subunit SecF (Desulfurispirillum indicum (strain ATCC BAA-1389 / DSM 22839 / S5)).